The chain runs to 555 residues: Formate--tetrahydrofolate ligase (555 aa).

An ATP-binding site is contributed by 65–72 (TPAGEGKT).

The protein belongs to the formate--tetrahydrofolate ligase family.

The catalysed reaction is (6S)-5,6,7,8-tetrahydrofolate + formate + ATP = (6R)-10-formyltetrahydrofolate + ADP + phosphate. The protein operates within one-carbon metabolism; tetrahydrofolate interconversion. The protein is Formate--tetrahydrofolate ligase of Thermoanaerobacter pseudethanolicus (strain ATCC 33223 / 39E) (Clostridium thermohydrosulfuricum).